Reading from the N-terminus, the 321-residue chain is Probable nucleosome assembly protein (321 aa).

Residues 272–298 show a composition bias toward acidic residues; it reads EENDYDFGEDFEDEEGEDDDEEDDEEE. Positions 272–321 are disordered; it reads EENDYDFGEDFEDEEGEDDDEEDDEEEQTIKKPSGKGKAQPQQPQDCKQQ. Residues 311-321 show a composition bias toward low complexity; sequence QPQQPQDCKQQ.

Belongs to the nucleosome assembly protein (NAP) family.

It is found in the nucleus. May modulate chromatin structure by regulation of histone octamer formation. This is Probable nucleosome assembly protein (nap1) from Dictyostelium discoideum (Social amoeba).